The chain runs to 182 residues: Isopentenyl-diphosphate Delta-isomerase (182 aa).

The Mn(2+) site is built by histidine 25 and histidine 32. One can recognise a Nudix hydrolase domain in the interval 30 to 164 (LLHLAFSSWL…PWAFSPWMVM (135 aa)). Cysteine 67 is a catalytic residue. Residue histidine 69 participates in Mn(2+) binding. Glutamate 87 contacts Mg(2+). 2 residues coordinate Mn(2+): glutamate 114 and glutamate 116. Residue glutamate 116 is part of the active site.

The protein belongs to the IPP isomerase type 1 family. In terms of assembly, homodimer. It depends on Mg(2+) as a cofactor. Requires Mn(2+) as cofactor.

It is found in the cytoplasm. It catalyses the reaction isopentenyl diphosphate = dimethylallyl diphosphate. It functions in the pathway isoprenoid biosynthesis; dimethylallyl diphosphate biosynthesis; dimethylallyl diphosphate from isopentenyl diphosphate: step 1/1. Catalyzes the 1,3-allylic rearrangement of the homoallylic substrate isopentenyl (IPP) to its highly electrophilic allylic isomer, dimethylallyl diphosphate (DMAPP). The chain is Isopentenyl-diphosphate Delta-isomerase from Shigella flexneri serotype 5b (strain 8401).